Here is a 161-residue protein sequence, read N- to C-terminus: N5-carboxyaminoimidazole ribonucleotide mutase (161 aa).

Substrate-binding residues include Ser-9, Asp-12, and Arg-39.

This sequence belongs to the AIR carboxylase family. Class I subfamily.

It catalyses the reaction 5-carboxyamino-1-(5-phospho-D-ribosyl)imidazole + H(+) = 5-amino-1-(5-phospho-D-ribosyl)imidazole-4-carboxylate. Its pathway is purine metabolism; IMP biosynthesis via de novo pathway; 5-amino-1-(5-phospho-D-ribosyl)imidazole-4-carboxylate from 5-amino-1-(5-phospho-D-ribosyl)imidazole (N5-CAIR route): step 2/2. Catalyzes the conversion of N5-carboxyaminoimidazole ribonucleotide (N5-CAIR) to 4-carboxy-5-aminoimidazole ribonucleotide (CAIR). This Aliivibrio fischeri (strain ATCC 700601 / ES114) (Vibrio fischeri) protein is N5-carboxyaminoimidazole ribonucleotide mutase.